Consider the following 56-residue polypeptide: Large ribosomal subunit protein bL32 (56 aa).

The segment covering 1–16 (MAVQKSKKSRARRGMR) has biased composition (basic residues). The tract at residues 1-56 (MAVQKSKKSRARRGMRRSHDAISGPSLTVDQTSGETHRRHHVTADGYYKGVQVISK) is disordered. Positions 25–34 (PSLTVDQTSG) are enriched in polar residues.

The protein belongs to the bacterial ribosomal protein bL32 family.

The chain is Large ribosomal subunit protein bL32 from Pseudoalteromonas translucida (strain TAC 125).